The following is a 641-amino-acid chain: MLAYYVSVNQGPGIEQKSLPQLTRLLDQGRVKALVFIRDTSTGQTFLEGRYTRPAGPTENAEIVVPFRTVVDLEFNRDLKQFLASKGFPEIDVKVIHNFWGQAFLSVLPFLLFILALYFLFRQQIRMAGRGAFSFGKSRARLLSGGKTKVTFKDVAGVEEAKEEVQELVEFLKDPKKFQKLGGRIPKGVLMVGPPGTGKTLLAKAIAGEADVPFFSISGSDFVEMFVGVGASRVRDMFEQARRHAPCIVFIDEIDAVGRARGTGLGGGHDEREQTLNALLVEMDGIESQEGVIVIAATNRKDVLDPALLRPGRFDREVRVNLPDIRGREQILRVHAQKIKLSKNADLSALARGTPGFSGAELANLINEAALIAAKKGKDNVDQPDLEEARDKVRWGKERRSLAMSEEERKTTAYHEAGHAVLNVLLENTDPIHKVTIIPRGPALGVTMMLPASDKYNARKKEVLDDLCVAMGGRVAEEVFLGDISSGASGDIRQATWYARKMVCEWGMSEKLGMVHYADDSSMVFLGRELGTSRGYSEATARAIDHEVQHFIQAAYEKAKRIILEHKDKVEALAQALLEYETLNADQVTEIVKTGKMTNPPSKNSSPVSNGGEASSTKSPARQEETTKDGGLLPGLEGAPA.

The Periplasmic segment spans residues 1–100; the sequence is MLAYYVSVNQ…IDVKVIHNFW (100 aa). Residues 101–121 traverse the membrane as a helical segment; that stretch reads GQAFLSVLPFLLFILALYFLF. At 122 to 641 the chain is on the cytoplasmic side; the sequence is RQQIRMAGRG…LLPGLEGAPA (520 aa). Residue 193 to 200 participates in ATP binding; that stretch reads GPPGTGKT. His415 is a Zn(2+) binding site. Residue Glu416 is part of the active site. Zn(2+)-binding residues include His419 and Asp491. Residues 593–641 form a disordered region; that stretch reads KTGKMTNPPSKNSSPVSNGGEASSTKSPARQEETTKDGGLLPGLEGAPA. Low complexity-rich tracts occupy residues 599–610 and 630–641; these read NPPSKNSSPVSN and GGLLPGLEGAPA.

This sequence in the central section; belongs to the AAA ATPase family. It in the C-terminal section; belongs to the peptidase M41 family. In terms of assembly, homohexamer. Zn(2+) is required as a cofactor.

It localises to the cell inner membrane. In terms of biological role, acts as a processive, ATP-dependent zinc metallopeptidase for both cytoplasmic and membrane proteins. Plays a role in the quality control of integral membrane proteins. This Methylacidiphilum infernorum (isolate V4) (Methylokorus infernorum (strain V4)) protein is ATP-dependent zinc metalloprotease FtsH 2.